A 423-amino-acid chain; its full sequence is CinA-like protein (423 aa).

The protein belongs to the CinA family.

This chain is CinA-like protein, found in Chlorobium phaeobacteroides (strain DSM 266 / SMG 266 / 2430).